We begin with the raw amino-acid sequence, 535 residues long: Sucrose transport protein SUT5 (535 aa).

At 1 to 53 (MEEGRRGDREAKSAAGWTALSTTKTTLEEKRRLQANGSVGGDAGTSGFRRIVR) the chain is on the cytoplasmic side. Residues 54–74 (LFFACMVAGGIQYGWALQLSL) traverse the membrane as a helical segment. The Extracellular segment spans residues 75–87 (LSPYSQTLGISHS). Residues 88–108 (YVSLTWICGPIAGFVVQPIVG) form a helical membrane-spanning segment. Residues 109-122 (YYSDRCTMKMGRRR) are Cytoplasmic-facing. The helical transmembrane segment at 123-143 (PFILVGCLIICISVMIIGFSA) threads the bilayer. Residues 144 to 163 (DIGRHLGDTKEHCSTYTGPR) lie on the Extracellular side of the membrane. The helical transmembrane segment at 164–184 (WSAAMVYIVGFWFLDFANNTV) threads the bilayer. Residues 185–203 (QGPARAMMADLSAGHHGPN) are Cytoplasmic-facing. The helical transmembrane segment at 204–224 (VGQSIFSLWMAIGSVLGYLSG) threads the bilayer. The Extracellular portion of the chain corresponds to 225 to 249 (ANGKWHEWFPWLKTAACCDACANLK). The helical transmembrane segment at 250 to 270 (GAFFTAVLLIVVSMTVTMYLA) threads the bilayer. Over 271-302 (DEMPLDKQDVDTSGGGGCAVFVDLFKSLRNLP) the chain is Cytoplasmic. A helical transmembrane segment spans residues 303–323 (PAMFKVLAVTAVTWLSWFPFI). Topologically, residues 324 to 354 (QYNTDWMGREIYHGEPQGTAAKADVYDAGVR) are extracellular. The chain crosses the membrane as a helical span at residues 355-375 (EGAMGLLFCSVALGVTSFVIP). At 376 to 384 (KLCRRLTSK) the chain is on the cytoplasmic side. Residues 385–405 (VVWSISNFLVFALMAVMVAVG) traverse the membrane as a helical segment. At 406-429 (MVSMRGYRPSLAAGLTGPDPTLKA) the chain is on the extracellular side. The helical transmembrane segment at 430 to 450 (VALVVFALIGIPQAVLFSVPW) threads the bilayer. Residues 451 to 465 (AVASEVTAEEGGGQG) lie on the Cytoplasmic side of the membrane. Residues 466-486 (LAIGVLNIAIVVPQLVIALTA) traverse the membrane as a helical segment. Residues 487 to 498 (GPIDGAFNKGNT) are Extracellular-facing. The helical transmembrane segment at 499–519 (PAFGIGGAFAFICGVLALIWL) threads the bilayer. Over 520–535 (PKTRGVSNAAVVAGGH) the chain is Cytoplasmic.

The protein belongs to the glycoside-pentoside-hexuronide (GPH) cation symporter transporter (TC 2.A.2.4) family. Homodimer.

The protein localises to the cell membrane. The protein operates within glycan biosynthesis; sucrose metabolism. Functionally, responsible for the transport of sucrose into the cell, with the concomitant uptake of protons (symport system). May also transport other glucosides. The protein is Sucrose transport protein SUT5 (SUT5) of Oryza sativa subsp. indica (Rice).